The sequence spans 336 residues: Nucleoid-associated protein Spro_3255 (336 aa).

This sequence belongs to the YejK family.

Its subcellular location is the cytoplasm. It localises to the nucleoid. The polypeptide is Nucleoid-associated protein Spro_3255 (Serratia proteamaculans (strain 568)).